The sequence spans 139 residues: 3-hydroxyacyl-[acyl-carrier-protein] dehydratase FabZ (139 aa).

Residue histidine 47 is part of the active site.

Belongs to the thioester dehydratase family. FabZ subfamily.

The protein resides in the cytoplasm. It catalyses the reaction a (3R)-hydroxyacyl-[ACP] = a (2E)-enoyl-[ACP] + H2O. Its function is as follows. Involved in unsaturated fatty acids biosynthesis. Catalyzes the dehydration of short chain beta-hydroxyacyl-ACPs and long chain saturated and unsaturated beta-hydroxyacyl-ACPs. This is 3-hydroxyacyl-[acyl-carrier-protein] dehydratase FabZ from Oenococcus oeni (strain ATCC BAA-331 / PSU-1).